The chain runs to 506 residues: Glutamate--tRNA ligase (506 aa).

Residues 12-22 (PSPTGDPHVGT) carry the 'HIGH' region motif. A 'KMSKS' region motif is present at residues 253–257 (KLSKR). Residue K256 coordinates ATP.

The protein belongs to the class-I aminoacyl-tRNA synthetase family. Glutamate--tRNA ligase type 1 subfamily. As to quaternary structure, monomer.

It localises to the cytoplasm. The catalysed reaction is tRNA(Glu) + L-glutamate + ATP = L-glutamyl-tRNA(Glu) + AMP + diphosphate. Its function is as follows. Catalyzes the attachment of glutamate to tRNA(Glu) in a two-step reaction: glutamate is first activated by ATP to form Glu-AMP and then transferred to the acceptor end of tRNA(Glu). This is Glutamate--tRNA ligase from Chlamydia trachomatis serovar A (strain ATCC VR-571B / DSM 19440 / HAR-13).